We begin with the raw amino-acid sequence, 562 residues long: NAD-dependent malic enzyme (562 aa).

The active-site Proton donor is Y101. R154 lines the NAD(+) pocket. Catalysis depends on K172, which acts as the Proton acceptor. The a divalent metal cation site is built by E243, D244, and D267. NAD(+) is bound by residues D267 and N415.

This sequence belongs to the malic enzymes family. Homotetramer. Mg(2+) is required as a cofactor. Requires Mn(2+) as cofactor.

It carries out the reaction (S)-malate + NAD(+) = pyruvate + CO2 + NADH. It catalyses the reaction oxaloacetate + H(+) = pyruvate + CO2. This Shewanella frigidimarina (strain NCIMB 400) protein is NAD-dependent malic enzyme.